Here is a 342-residue protein sequence, read N- to C-terminus: Tetraacyldisaccharide 4'-kinase (342 aa).

Residue 68–75 participates in ATP binding; that stretch reads TVGGTGKT.

Belongs to the LpxK family.

The catalysed reaction is a lipid A disaccharide + ATP = a lipid IVA + ADP + H(+). It functions in the pathway glycolipid biosynthesis; lipid IV(A) biosynthesis; lipid IV(A) from (3R)-3-hydroxytetradecanoyl-[acyl-carrier-protein] and UDP-N-acetyl-alpha-D-glucosamine: step 6/6. Its function is as follows. Transfers the gamma-phosphate of ATP to the 4'-position of a tetraacyldisaccharide 1-phosphate intermediate (termed DS-1-P) to form tetraacyldisaccharide 1,4'-bis-phosphate (lipid IVA). This chain is Tetraacyldisaccharide 4'-kinase, found in Burkholderia ambifaria (strain MC40-6).